A 355-amino-acid polypeptide reads, in one-letter code: Probable nitronate monooxygenase (355 aa).

FMN contacts are provided by residues asparagine 71, glutamine 175, glycine 180, glycine 218, and 237-240 (QMGT).

It belongs to the nitronate monooxygenase family. NMO class I subfamily. Requires FMN as cofactor.

It carries out the reaction 3 propionate 3-nitronate + 3 O2 + H2O = 3 3-oxopropanoate + 2 nitrate + nitrite + H2O2 + 3 H(+). In terms of biological role, nitronate monooxygenase that uses molecular oxygen to catalyze the oxidative denitrification of alkyl nitronates. Acts on propionate 3-nitronate (P3N), the presumed physiological substrate. Probably functions in the detoxification of P3N, a metabolic poison produced by plants and fungi as a defense mechanism. The chain is Probable nitronate monooxygenase from Staphylococcus aureus (strain JH1).